Consider the following 233-residue polypeptide: MATVRELKATARPKSGKGAARAERRAGRVPGVIYGNNQPPQPISVEEPELRQRILAGRFLTTVFDISLEGKKHRVIPRDFHLDPVKDFPIHVDFLRLGEGATIRVSIPIRLLKADVAPGVKRGGTVNLVIHAIDVECAADDIPQFIEADVGGLEMSHSLHLSDVELPPGVKPLAREDMTLVTIVPPSGYAEEVKAAAAAAAAGTAAPAAGAAPAAGAAAAGAKAPAGGGDKKK.

The segment at 1–23 is disordered; that stretch reads MATVRELKATARPKSGKGAARAE.

The protein belongs to the bacterial ribosomal protein bL25 family. CTC subfamily. As to quaternary structure, part of the 50S ribosomal subunit; part of the 5S rRNA/L5/L18/L25 subcomplex. Contacts the 5S rRNA. Binds to the 5S rRNA independently of L5 and L18.

In terms of biological role, this is one of the proteins that binds to the 5S RNA in the ribosome where it forms part of the central protuberance. This chain is Large ribosomal subunit protein bL25, found in Nitrobacter hamburgensis (strain DSM 10229 / NCIMB 13809 / X14).